A 319-amino-acid chain; its full sequence is 4-hydroxy-3-methylbut-2-enyl diphosphate reductase (319 aa).

Position 18 (Cys18) interacts with [4Fe-4S] cluster. His47 and His81 together coordinate (2E)-4-hydroxy-3-methylbut-2-enyl diphosphate. The dimethylallyl diphosphate site is built by His47 and His81. Residues His47 and His81 each contribute to the isopentenyl diphosphate site. Residue Cys103 coordinates [4Fe-4S] cluster. (2E)-4-hydroxy-3-methylbut-2-enyl diphosphate is bound at residue His131. His131 provides a ligand contact to dimethylallyl diphosphate. His131 provides a ligand contact to isopentenyl diphosphate. Glu133 (proton donor) is an active-site residue. Thr172 is a binding site for (2E)-4-hydroxy-3-methylbut-2-enyl diphosphate. Residue Cys202 participates in [4Fe-4S] cluster binding. (2E)-4-hydroxy-3-methylbut-2-enyl diphosphate contacts are provided by Ser230, Ser231, Asn232, and Ser275. 4 residues coordinate dimethylallyl diphosphate: Ser230, Ser231, Asn232, and Ser275. Isopentenyl diphosphate-binding residues include Ser230, Ser231, Asn232, and Ser275.

This sequence belongs to the IspH family. [4Fe-4S] cluster serves as cofactor.

The enzyme catalyses isopentenyl diphosphate + 2 oxidized [2Fe-2S]-[ferredoxin] + H2O = (2E)-4-hydroxy-3-methylbut-2-enyl diphosphate + 2 reduced [2Fe-2S]-[ferredoxin] + 2 H(+). It catalyses the reaction dimethylallyl diphosphate + 2 oxidized [2Fe-2S]-[ferredoxin] + H2O = (2E)-4-hydroxy-3-methylbut-2-enyl diphosphate + 2 reduced [2Fe-2S]-[ferredoxin] + 2 H(+). It functions in the pathway isoprenoid biosynthesis; dimethylallyl diphosphate biosynthesis; dimethylallyl diphosphate from (2E)-4-hydroxy-3-methylbutenyl diphosphate: step 1/1. The protein operates within isoprenoid biosynthesis; isopentenyl diphosphate biosynthesis via DXP pathway; isopentenyl diphosphate from 1-deoxy-D-xylulose 5-phosphate: step 6/6. In terms of biological role, catalyzes the conversion of 1-hydroxy-2-methyl-2-(E)-butenyl 4-diphosphate (HMBPP) into a mixture of isopentenyl diphosphate (IPP) and dimethylallyl diphosphate (DMAPP). Acts in the terminal step of the DOXP/MEP pathway for isoprenoid precursor biosynthesis. In Methylocella silvestris (strain DSM 15510 / CIP 108128 / LMG 27833 / NCIMB 13906 / BL2), this protein is 4-hydroxy-3-methylbut-2-enyl diphosphate reductase.